Consider the following 392-residue polypeptide: Zinc finger protein ham-2 (392 aa).

2 consecutive C2H2-type zinc fingers follow at residues 16–39 and 43–66; these read FPCSICQKVFCHSSSLSRHRMQAH and YTCTTCNNEIPSNDTLRSHMYRVH. The segment at 72–95 adopts a C2H2-type 3; degenerate zinc-finger fold; sequence FMCRCCNWAFPDKTSLHIHMQSML. Disordered stretches follow at residues 106 to 130 and 278 to 303; these read LAKSSDVVDSTSESGSPRQSPPFSP and HISHDQPSPTVSDSHISGGSSSHSGE. A compositionally biased stretch (polar residues) spans 112–123; it reads VVDSTSESGSPR. The segment covering 289 to 303 has biased composition (low complexity); sequence SDSHISGGSSSHSGE.

The protein resides in the nucleus. Its function is as follows. Probable transcription factor that acts downstream of egl-15, to promote migration of the HSN motor neurons from the tail to the gonad primordium during HSN cell differentiation. The polypeptide is Zinc finger protein ham-2 (Caenorhabditis elegans).